Reading from the N-terminus, the 571-residue chain is Urease subunit alpha (571 aa).

Residues 133–571 (GGIDTHVHFI…LPLTQRYFLF (439 aa)) form the Urease domain. Ni(2+) contacts are provided by His-138, His-140, and Lys-221. Lys-221 is subject to N6-carboxylysine. His-223 lines the substrate pocket. Ni(2+) is bound by residues His-250 and His-276. The active-site Proton donor is the His-324. Asp-364 is a binding site for Ni(2+).

Belongs to the metallo-dependent hydrolases superfamily. Urease alpha subunit family. In terms of assembly, heterotrimer of UreA (gamma), UreB (beta) and UreC (alpha) subunits. Three heterotrimers associate to form the active enzyme. Ni cation serves as cofactor. In terms of processing, carboxylation allows a single lysine to coordinate two nickel ions.

The protein resides in the cytoplasm. The catalysed reaction is urea + 2 H2O + H(+) = hydrogencarbonate + 2 NH4(+). Its pathway is nitrogen metabolism; urea degradation; CO(2) and NH(3) from urea (urease route): step 1/1. This is Urease subunit alpha from Staphylococcus aureus (strain USA300).